A 564-amino-acid polypeptide reads, in one-letter code: Septation ring formation regulator EzrA (564 aa).

Residues 1 to 2 (MV) lie on the Extracellular side of the membrane. The helical transmembrane segment at 3-21 (FVISVILAIIVILTIGLIL) threads the bilayer. At 22-564 (RKRIYDKVDH…IEENQLTLNR (543 aa)) the chain is on the cytoplasmic side. 4 coiled-coil regions span residues 101–140 (ANNILTEGDQKLQNIEVKIEEILEELDELLSSEKTSREEV), 168–215 (FDKK…MEQF), 251–436 (GFDK…KKSN), and 468–537 (DIAK…ELSL).

It belongs to the EzrA family.

Its subcellular location is the cell membrane. Its function is as follows. Negative regulator of FtsZ ring formation; modulates the frequency and position of FtsZ ring formation. Inhibits FtsZ ring formation at polar sites. Interacts either with FtsZ or with one of its binding partners to promote depolymerization. This chain is Septation ring formation regulator EzrA, found in Oceanobacillus iheyensis (strain DSM 14371 / CIP 107618 / JCM 11309 / KCTC 3954 / HTE831).